Reading from the N-terminus, the 105-residue chain is UPF0145 protein GK1405 (105 aa).

It belongs to the UPF0145 family.

This chain is UPF0145 protein GK1405, found in Geobacillus kaustophilus (strain HTA426).